The sequence spans 353 residues: Trans-enoyl reductase eqxC (353 aa).

An NADP(+)-binding site is contributed by 45-48; the sequence is VDTK. 131-138 serves as a coordination point for substrate; sequence ISFMTTGL. NADP(+) is bound by residues 166-169, 189-192, Y207, and 254-255; these read SSAT, SPRN, and LE. 275-279 is a binding site for substrate; sequence GPQML. Residue 344–345 participates in NADP(+) binding; sequence IS.

The protein belongs to the zinc-containing alcohol dehydrogenase family. Monomer.

It catalyses the reaction L-serine + 7 malonyl-CoA + acetyl-CoA + 2 S-adenosyl-L-methionine + ATP + 8 NADPH + 11 H(+) = (5S)-3-[(2E,6R,8E,10E,12E)-2,6-dimethyltetradeca-2,8,10,12-tetraenoyl]-5-(hydroxymethyl)pyrrolidine-2,4-dione + AMP + 2 S-adenosyl-L-homocysteine + 7 CO2 + diphosphate + 8 NADP(+) + 8 CoA + 6 H2O. It participates in mycotoxin biosynthesis. Trans-enoyl reductase; part of the gene cluster that mediates the biosynthesis of equisetin, a trans-fused decalin-containing tetramic acid with antimicrobial activity. The PKS module of eqxS together with the enoylreductase eqxC catalyze the formation of the polyketide unit which is then conjugated to L-serine by the condensation domain of the eqxS NRPS module. Activity of the Dieckmann cyclase domain (RED) results in release of the Dieckmann product intermediate. Diels-Alderase eqx3 is involved in endo-selective Diels-Alder cycloaddition to form the decalin ring, leading to the production of N-desmethylequisetin also called trichosetin. Subsequent N-methylation is carried out by eqxD to give equisetin. This Fusarium heterosporum protein is Trans-enoyl reductase eqxC.